Reading from the N-terminus, the 275-residue chain is 3-methyl-2-oxobutanoate hydroxymethyltransferase (275 aa).

Asp-49 and Asp-88 together coordinate Mg(2+). Residues 49–50 (DS), Asp-88, and Lys-118 contribute to the 3-methyl-2-oxobutanoate site. Residue Glu-120 coordinates Mg(2+). The Proton acceptor role is filled by Glu-187.

This sequence belongs to the PanB family. In terms of assembly, homodecamer; pentamer of dimers. Requires Mg(2+) as cofactor.

It localises to the cytoplasm. The catalysed reaction is 3-methyl-2-oxobutanoate + (6R)-5,10-methylene-5,6,7,8-tetrahydrofolate + H2O = 2-dehydropantoate + (6S)-5,6,7,8-tetrahydrofolate. The protein operates within cofactor biosynthesis; (R)-pantothenate biosynthesis; (R)-pantoate from 3-methyl-2-oxobutanoate: step 1/2. Catalyzes the reversible reaction in which hydroxymethyl group from 5,10-methylenetetrahydrofolate is transferred onto alpha-ketoisovalerate to form ketopantoate. The sequence is that of 3-methyl-2-oxobutanoate hydroxymethyltransferase from Rhodospirillum centenum (strain ATCC 51521 / SW).